The chain runs to 487 residues: GTPase Der (487 aa).

2 consecutive EngA-type G domains span residues 3–166 (PVIA…PRDA) and 193–366 (IKIA…KSAV). GTP-binding positions include 9 to 16 (GRPNVGKS), 56 to 60 (DTGGI), 118 to 121 (NKID), 199 to 206 (GRPNVGKS), 246 to 250 (DTAGV), and 311 to 314 (NKWD). One can recognise a KH-like domain in the interval 367 to 451 (TRWPTSRLTQ…PIRIEYKGGE (85 aa)). The segment covering 448-461 (KGGENPYEGKKNTL) has biased composition (basic and acidic residues). A disordered region spans residues 448–487 (KGGENPYEGKKNTLTDRQVNKKRRLMSHHKKAEKKRRDKR). Positions 467 to 487 (NKKRRLMSHHKKAEKKRRDKR) are enriched in basic residues.

The protein belongs to the TRAFAC class TrmE-Era-EngA-EngB-Septin-like GTPase superfamily. EngA (Der) GTPase family. As to quaternary structure, associates with the 50S ribosomal subunit.

Its function is as follows. GTPase that plays an essential role in the late steps of ribosome biogenesis. The protein is GTPase Der of Pseudomonas putida (strain W619).